A 172-amino-acid polypeptide reads, in one-letter code: MSSARDSQAQHGLKRAASPDGSGSWQAADLGNEERKQKFLRLMGAGKKEHTGRLVIGDHRSTSHFRTGEEDKKMNEELESQYQQSMDSTMSGRNRRHCGLGFSEFQEVEEEAAGHSSDHESSEDSESGSDSEQDESAEELQAAEKHDEAAVPENKKEAKSNYKMMFVKASGS.

A compositionally biased stretch (polar residues) spans 1–10; that stretch reads MSSARDSQAQ. Positions 1–172 are disordered; the sequence is MSSARDSQAQ…KMMFVKASGS (172 aa). Residues 46-76 are compositionally biased toward basic and acidic residues; the sequence is GKKEHTGRLVIGDHRSTSHFRTGEEDKKMNE. Positions 80–92 are enriched in polar residues; that stretch reads SQYQQSMDSTMSG. The span at 112–122 shows a compositional bias: basic and acidic residues; that stretch reads AAGHSSDHESS. Positions 123-138 are enriched in acidic residues; sequence EDSESGSDSEQDESAE. The segment covering 142-160 has biased composition (basic and acidic residues); the sequence is AAEKHDEAAVPENKKEAKS.

Belongs to the SMAP family. In terms of tissue distribution, expressed in otocyst.

This chain is Small acidic protein (SMAP), found in Coturnix japonica (Japanese quail).